The sequence spans 61 residues: Small ribosomal subunit protein uS14 (61 aa).

C24, C27, C40, and C43 together coordinate Zn(2+).

It belongs to the universal ribosomal protein uS14 family. Zinc-binding uS14 subfamily. Part of the 30S ribosomal subunit. Contacts proteins S3 and S10. The cofactor is Zn(2+).

Functionally, binds 16S rRNA, required for the assembly of 30S particles and may also be responsible for determining the conformation of the 16S rRNA at the A site. This chain is Small ribosomal subunit protein uS14, found in Campylobacter concisus (strain 13826).